The primary structure comprises 71 residues: Exodeoxyribonuclease 7 small subunit (71 aa).

The protein belongs to the XseB family. As to quaternary structure, heterooligomer composed of large and small subunits.

Its subcellular location is the cytoplasm. It carries out the reaction Exonucleolytic cleavage in either 5'- to 3'- or 3'- to 5'-direction to yield nucleoside 5'-phosphates.. Functionally, bidirectionally degrades single-stranded DNA into large acid-insoluble oligonucleotides, which are then degraded further into small acid-soluble oligonucleotides. This Streptococcus suis (strain 98HAH33) protein is Exodeoxyribonuclease 7 small subunit.